Reading from the N-terminus, the 466-residue chain is Adenosylhomocysteinase (466 aa).

The substrate site is built by T57, D132, and E192. 193-195 (TTT) is an NAD(+) binding site. Substrate contacts are provided by K222 and D226. NAD(+) is bound by residues N227, 256–261 (GYGDVG), E279, N314, 335–337 (IGH), and N380.

It belongs to the adenosylhomocysteinase family. It depends on NAD(+) as a cofactor.

Its subcellular location is the cytoplasm. It catalyses the reaction S-adenosyl-L-homocysteine + H2O = L-homocysteine + adenosine. Its pathway is amino-acid biosynthesis; L-homocysteine biosynthesis; L-homocysteine from S-adenosyl-L-homocysteine: step 1/1. May play a key role in the regulation of the intracellular concentration of adenosylhomocysteine. This chain is Adenosylhomocysteinase, found in Rhizobium etli (strain ATCC 51251 / DSM 11541 / JCM 21823 / NBRC 15573 / CFN 42).